The chain runs to 629 residues: tRNA uridine 5-carboxymethylaminomethyl modification enzyme MnmG (629 aa).

Position 11 to 16 (11 to 16 (GGGHAG)) interacts with FAD. 273–287 (GPRYCPSFEDKVVRF) is a binding site for NAD(+).

Belongs to the MnmG family. In terms of assembly, homodimer. Heterotetramer of two MnmE and two MnmG subunits. FAD serves as cofactor.

It is found in the cytoplasm. Functionally, NAD-binding protein involved in the addition of a carboxymethylaminomethyl (cmnm) group at the wobble position (U34) of certain tRNAs, forming tRNA-cmnm(5)s(2)U34. This is tRNA uridine 5-carboxymethylaminomethyl modification enzyme MnmG from Mycoplasma capricolum subsp. capricolum (strain California kid / ATCC 27343 / NCTC 10154).